A 258-amino-acid chain; its full sequence is Type III pantothenate kinase (258 aa).

Position 6 to 13 (6 to 13 (DVGNTNTV)) interacts with ATP. Residues Y100 and 107–110 (GADR) each bind substrate. Catalysis depends on D109, which acts as the Proton acceptor. Residue D129 coordinates K(+). Residue T132 coordinates ATP. T184 contributes to the substrate binding site.

This sequence belongs to the type III pantothenate kinase family. As to quaternary structure, homodimer. It depends on NH4(+) as a cofactor. K(+) serves as cofactor.

It is found in the cytoplasm. It catalyses the reaction (R)-pantothenate + ATP = (R)-4'-phosphopantothenate + ADP + H(+). Its pathway is cofactor biosynthesis; coenzyme A biosynthesis; CoA from (R)-pantothenate: step 1/5. With respect to regulation, not regulated by feedback inhibition by CoA and its thioesters as described for many other pantothenate kinases. Not inhibited by N-pentylpantothenamide (N5-Pan), and this compound cannot act as a substrate either. In terms of biological role, catalyzes the phosphorylation of pantothenate (Pan), the first step in CoA biosynthesis. Cannot utilize a phosphoryl donor other than ATP. The chain is Type III pantothenate kinase (coaX) from Bacillus subtilis (strain 168).